A 509-amino-acid chain; its full sequence is 5-OH-xanthotoxin synthase (509 aa).

A helical membrane pass occupies residues 5–25 (AVVILLILAFPIASVYVLFYH). Residues 368–373 (TGALLI) form a substrate specificity region. Position 449 (Cys-449) interacts with heme.

Belongs to the cytochrome P450 family. Heme serves as cofactor.

It localises to the microsome membrane. It carries out the reaction xanthotoxin + reduced [NADPH--hemoprotein reductase] + O2 = 5-hydroxyxanthotoxin + oxidized [NADPH--hemoprotein reductase] + H2O + 2 H(+). Its pathway is secondary metabolite biosynthesis. Its function is as follows. Involved in the biosynthesis of coumarins and furanocoumarins (FCs), natural products required for defense responses against attacks by predators with potential medical and agroindustrial usages such as anticoagulant, rodenticide and artificial vanilla substitutes. Catalyzes the conversion of xanthotoxin into 5-hydroxyxanthotoxin. In Ammi majus (Bishop's weed), this protein is 5-OH-xanthotoxin synthase.